The primary structure comprises 142 residues: Large ribosomal subunit protein uL13 (142 aa).

The protein belongs to the universal ribosomal protein uL13 family. In terms of assembly, part of the 50S ribosomal subunit.

In terms of biological role, this protein is one of the early assembly proteins of the 50S ribosomal subunit, although it is not seen to bind rRNA by itself. It is important during the early stages of 50S assembly. The sequence is that of Large ribosomal subunit protein uL13 from Helicobacter hepaticus (strain ATCC 51449 / 3B1).